Reading from the N-terminus, the 380-residue chain is O-phospho-L-seryl-tRNA:Cys-tRNA synthase (380 aa).

Pyridoxal 5'-phosphate-binding positions include 86 to 87, N192, and 215 to 217; these read AR and SGH. N6-(pyridoxal phosphate)lysine is present on K218.

The protein belongs to the SepCysS family. In terms of assembly, homodimer. Interacts with SepRS. Pyridoxal 5'-phosphate is required as a cofactor.

The enzyme catalyses O-phospho-L-seryl-tRNA(Cys) + hydrogen sulfide + H(+) = L-cysteinyl-tRNA(Cys) + phosphate. In terms of biological role, converts O-phospho-L-seryl-tRNA(Cys) (Sep-tRNA(Cys)) to L-cysteinyl-tRNA(Cys) (Cys-tRNA(Cys)). This Methanococcus maripaludis (strain DSM 14266 / JCM 13030 / NBRC 101832 / S2 / LL) protein is O-phospho-L-seryl-tRNA:Cys-tRNA synthase.